Reading from the N-terminus, the 113-residue chain is Iron-sulfur cluster insertion protein ErpA (113 aa).

Iron-sulfur cluster-binding residues include Cys-41, Cys-105, and Cys-107.

Belongs to the HesB/IscA family. As to quaternary structure, homodimer. Iron-sulfur cluster serves as cofactor.

Its function is as follows. Required for insertion of 4Fe-4S clusters for at least IspG. This Vibrio vulnificus (strain YJ016) protein is Iron-sulfur cluster insertion protein ErpA.